We begin with the raw amino-acid sequence, 917 residues long: Gamma-tubulin complex component 3 (917 aa).

Belongs to the TUBGCP family. Gamma-tubulin small complex (Gamma TuSC) is a heterotetrameric complex which contains two molecules of gamma-tubulin, and one molecule each of Dgrip84 and Dgrip91. The gamma-tubulin in this complex binds preferentially to GDP over GTP.

The protein localises to the cytoplasm. The protein resides in the cytoskeleton. Its subcellular location is the microtubule organizing center. It is found in the centrosome. It localises to the perinuclear region. This chain is Gamma-tubulin complex component 3, found in Drosophila melanogaster (Fruit fly).